The chain runs to 82 residues: Small ribosomal subunit protein uS15 (82 aa).

It belongs to the universal ribosomal protein uS15 family. Part of the 30S ribosomal subunit. Forms a bridge to the 50S subunit in the 70S ribosome, contacting the 23S rRNA.

Its function is as follows. One of the primary rRNA binding proteins, it binds directly to 16S rRNA where it helps nucleate assembly of the platform of the 30S subunit by binding and bridging several RNA helices of the 16S rRNA. Functionally, forms an intersubunit bridge (bridge B4) with the 23S rRNA of the 50S subunit in the ribosome. The polypeptide is Small ribosomal subunit protein uS15 (Pelagibacter ubique (strain HTCC1062)).